Consider the following 206-residue polypeptide: Peroxynitrite isomerase (206 aa).

Residues 21–27 (GTWEGNG) carry the GXWXGXG motif. Histidine 190 provides a ligand contact to heme b.

Belongs to the nitrobindin family. Homodimer. It depends on heme b as a cofactor.

It carries out the reaction peroxynitrite = nitrate. It functions in the pathway nitrogen metabolism. In terms of biological role, heme-binding protein able to scavenge peroxynitrite and to protect free L-tyrosine against peroxynitrite-mediated nitration, by acting as a peroxynitrite isomerase that converts peroxynitrite to nitrate. Therefore, this protein likely plays a role in peroxynitrite sensing and in the detoxification of reactive nitrogen and oxygen species (RNS and ROS, respectively). Is able to bind nitric oxide (NO) in vitro, but may act as a sensor of peroxynitrite levels in vivo. This Kocuria rhizophila (strain ATCC 9341 / DSM 348 / NBRC 103217 / DC2201) protein is Peroxynitrite isomerase.